We begin with the raw amino-acid sequence, 267 residues long: Taurine import ATP-binding protein TauB (267 aa).

The ABC transporter domain maps to 6 to 238 (FNEASLIYPA…DILAGAPASE (233 aa)). 43-50 (GRSGSGKT) is an ATP binding site.

The protein belongs to the ABC transporter superfamily. Taurine importer (TC 3.A.1.17.1) family. As to quaternary structure, the complex is composed of two ATP-binding proteins (TauB), two transmembrane proteins (TauC) and a solute-binding protein (TauA).

The protein resides in the cell inner membrane. The catalysed reaction is taurine(out) + ATP + H2O = taurine(in) + ADP + phosphate + H(+). Part of the ABC transporter complex TauABC involved in taurine import. Responsible for energy coupling to the transport system. The sequence is that of Taurine import ATP-binding protein TauB from Sinorhizobium fredii (strain NBRC 101917 / NGR234).